The following is a 211-amino-acid chain: ATP phosphoribosyltransferase (211 aa).

Belongs to the ATP phosphoribosyltransferase family. Short subfamily. Heteromultimer composed of HisG and HisZ subunits.

Its subcellular location is the cytoplasm. The catalysed reaction is 1-(5-phospho-beta-D-ribosyl)-ATP + diphosphate = 5-phospho-alpha-D-ribose 1-diphosphate + ATP. The protein operates within amino-acid biosynthesis; L-histidine biosynthesis; L-histidine from 5-phospho-alpha-D-ribose 1-diphosphate: step 1/9. Functionally, catalyzes the condensation of ATP and 5-phosphoribose 1-diphosphate to form N'-(5'-phosphoribosyl)-ATP (PR-ATP). Has a crucial role in the pathway because the rate of histidine biosynthesis seems to be controlled primarily by regulation of HisG enzymatic activity. In Sorangium cellulosum (strain So ce56) (Polyangium cellulosum (strain So ce56)), this protein is ATP phosphoribosyltransferase.